The sequence spans 88 residues: Small ribosomal subunit protein uS17 (88 aa).

Belongs to the universal ribosomal protein uS17 family. In terms of assembly, part of the 30S ribosomal subunit.

Its function is as follows. One of the primary rRNA binding proteins, it binds specifically to the 5'-end of 16S ribosomal RNA. The polypeptide is Small ribosomal subunit protein uS17 (Nitratidesulfovibrio vulgaris (strain ATCC 29579 / DSM 644 / CCUG 34227 / NCIMB 8303 / VKM B-1760 / Hildenborough) (Desulfovibrio vulgaris)).